We begin with the raw amino-acid sequence, 527 residues long: DNA damage-binding protein cmr1 (527 aa).

The tract at residues 35-90 (AGLFPPKSARSSPGGLTKPKKKPAPKKVKKEDEDLVPRRMSSRLRGLAADSEVAKR) is disordered. Residues 52-62 (KPKKKPAPKKV) show a composition bias toward basic residues. WD repeat units follow at residues 185-226 (LTPE…PISA), 249-289 (PHTR…SVEK), 296-336 (SDDI…RSAV), 341-381 (LSEK…HDEP), 388-427 (VSRL…AAWK), 450-493 (GRWV…LAQL), and 496-527 (DGIT…CLWM). A disordered region spans residues 284–303 (TTSVEKYAPESTSDDIPISG).

Belongs to the WD repeat DDB2/WDR76 family.

In terms of biological role, DNA-binding protein that binds to both single- and double-stranded DNA. Binds preferentially to UV-damaged DNA. May be involved in DNA-metabolic processes. This chain is DNA damage-binding protein cmr1, found in Neosartorya fischeri (strain ATCC 1020 / DSM 3700 / CBS 544.65 / FGSC A1164 / JCM 1740 / NRRL 181 / WB 181) (Aspergillus fischerianus).